The primary structure comprises 431 residues: 5-methylthioadenosine/S-adenosylhomocysteine deaminase (431 aa).

Positions 66 and 68 each coordinate Zn(2+). Substrate is bound by residues glutamate 95, arginine 147, and histidine 185. Histidine 212 contributes to the Zn(2+) binding site. Glutamate 215 and aspartate 300 together coordinate substrate. Residue aspartate 300 participates in Zn(2+) binding.

The protein belongs to the metallo-dependent hydrolases superfamily. MTA/SAH deaminase family. Requires Zn(2+) as cofactor.

The catalysed reaction is S-adenosyl-L-homocysteine + H2O + H(+) = S-inosyl-L-homocysteine + NH4(+). It carries out the reaction S-methyl-5'-thioadenosine + H2O + H(+) = S-methyl-5'-thioinosine + NH4(+). In terms of biological role, catalyzes the deamination of 5-methylthioadenosine and S-adenosyl-L-homocysteine into 5-methylthioinosine and S-inosyl-L-homocysteine, respectively. Is also able to deaminate adenosine. This Desulfitobacterium hafniense (strain DSM 10664 / DCB-2) protein is 5-methylthioadenosine/S-adenosylhomocysteine deaminase.